The primary structure comprises 242 residues: DNA repair protein RecO (242 aa).

The protein belongs to the RecO family.

Functionally, involved in DNA repair and RecF pathway recombination. This Bacteroides fragilis (strain ATCC 25285 / DSM 2151 / CCUG 4856 / JCM 11019 / LMG 10263 / NCTC 9343 / Onslow / VPI 2553 / EN-2) protein is DNA repair protein RecO.